A 160-amino-acid chain; its full sequence is uncharacterized protein (160 aa).

Positions 2–140 (MIIIPNNEIA…KARRLKPEIP (139 aa)) constitute an N-acetyltransferase domain.

This is an uncharacterized protein from Bacillus subtilis (strain 168).